The chain runs to 182 residues: NADH-quinone oxidoreductase subunit I (182 aa).

4Fe-4S ferredoxin-type domains follow at residues 52–82 (LTRD…LQKA) and 92–121 (DFFR…LTPD). 8 residues coordinate [4Fe-4S] cluster: cysteine 62, cysteine 65, cysteine 68, cysteine 72, cysteine 101, cysteine 104, cysteine 107, and cysteine 111.

The protein belongs to the complex I 23 kDa subunit family. In terms of assembly, NDH-1 is composed of 13 different subunits. Subunits NuoA, H, J, K, L, M, N constitute the membrane sector of the complex. Requires [4Fe-4S] cluster as cofactor.

It localises to the cell inner membrane. It catalyses the reaction a quinone + NADH + 5 H(+)(in) = a quinol + NAD(+) + 4 H(+)(out). NDH-1 shuttles electrons from NADH, via FMN and iron-sulfur (Fe-S) centers, to quinones in the respiratory chain. The immediate electron acceptor for the enzyme in this species is believed to be ubiquinone. Couples the redox reaction to proton translocation (for every two electrons transferred, four hydrogen ions are translocated across the cytoplasmic membrane), and thus conserves the redox energy in a proton gradient. This Pseudomonas fluorescens (strain Pf0-1) protein is NADH-quinone oxidoreductase subunit I.